The primary structure comprises 648 residues: Macrolide export ATP-binding/permease protein MacB 1 (648 aa).

The ABC transporter domain maps to 6–244 (LQLSGIRRHF…PAPTTSRADT (239 aa)). 42–49 (GASGSGKS) provides a ligand contact to ATP. A disordered region spans residues 222-248 (VVADRRREPTPPSPAPTTSRADTGGRG). 4 helical membrane-spanning segments follow: residues 273–293 (FLTM…VALG), 521–541 (LTLL…IGVM), 578–598 (LVCL…GVLF), and 613–633 (AVLM…FFPA).

The protein belongs to the ABC transporter superfamily. Macrolide exporter (TC 3.A.1.122) family. In terms of assembly, homodimer. Part of the tripartite efflux system MacAB-TolC, which is composed of an inner membrane transporter, MacB, a periplasmic membrane fusion protein, MacA, and an outer membrane component, TolC. The complex forms a large protein conduit and can translocate molecules across both the inner and outer membranes. Interacts with MacA.

The protein localises to the cell inner membrane. Its function is as follows. Part of the tripartite efflux system MacAB-TolC. MacB is a non-canonical ABC transporter that contains transmembrane domains (TMD), which form a pore in the inner membrane, and an ATP-binding domain (NBD), which is responsible for energy generation. Confers resistance against macrolides. The polypeptide is Macrolide export ATP-binding/permease protein MacB 1 (Aeromonas hydrophila subsp. hydrophila (strain ATCC 7966 / DSM 30187 / BCRC 13018 / CCUG 14551 / JCM 1027 / KCTC 2358 / NCIMB 9240 / NCTC 8049)).